The chain runs to 266 residues: MATVPEPINEMMAYYSDENELLFEADGPKQMKSCIQHLDLGSMGDGNIQLQISHQLYNKSFRQVVSVIVAMEKLRNSAYAHVFHDDDLRSILSFIFEEEPVIFETSSDEFLCDAPVQSVKCKLQDREQKSLVLASPCVLKALHLLSQEMSREVVFCMSFVQGEERDNKIPVALGIKDKNLYLSCVKKGDTPTLQLEEVDPKVYPKRNMEKRFVFYKTEIKNTVEFESVLYPNWYISTSQIEERPVFLGHFRGGQDITDFRMETLSP.

Residues 1–113 (MATVPEPINE…ETSSDEFLCD (113 aa)) constitute a propeptide that is removed on maturation.

It belongs to the IL-1 family. Monomer. In its precursor form, weakly interacts with full-length MEFV; the mature cytokine does not interact at all. Interacts with integrins ITGAV:ITGBV and ITGA5:ITGB1; integrin-binding is required for IL1B signaling. Interacts with cargo receptor TMED10; the interaction is direct and is required for the secretion of IL1B mature form. Interacts with HSP90AB1; the interaction facilitates cargo translocation into the ERGIC. Interacts with HSP90B1; the interaction facilitates cargo translocation into the ERGIC.

Its subcellular location is the cytoplasm. It is found in the cytosol. The protein localises to the secreted. The protein resides in the lysosome. It localises to the extracellular exosome. Functionally, potent pro-inflammatory cytokine. Initially discovered as the major endogenous pyrogen, induces prostaglandin synthesis, neutrophil influx and activation, T-cell activation and cytokine production, B-cell activation and antibody production, and fibroblast proliferation and collagen production. Promotes Th17 differentiation of T-cells. Synergizes with IL12/interleukin-12 to induce IFNG synthesis from T-helper 1 (Th1) cells. Plays a role in angiogenesis by inducing VEGF production synergistically with TNF and IL6. Involved in transduction of inflammation downstream of pyroptosis: its mature form is specifically released in the extracellular milieu by passing through the gasdermin-D (GSDMD) pore. This is Interleukin-1 beta (IL1B) from Bubalus carabanensis (Swamp type water buffalo).